We begin with the raw amino-acid sequence, 598 residues long: Aspartate--tRNA(Asp/Asn) ligase (598 aa).

Glutamate 175 is an L-aspartate binding site. Residues 199 to 202 form an aspartate region; that stretch reads QQFK. Residues arginine 221 and histidine 452 each contribute to the L-aspartate site. 221-223 is an ATP binding site; that stretch reads RDE. Glutamate 486 lines the ATP pocket. Arginine 493 provides a ligand contact to L-aspartate. 538–541 serves as a coordination point for ATP; it reads GVDR.

The protein belongs to the class-II aminoacyl-tRNA synthetase family. Type 1 subfamily. As to quaternary structure, homodimer.

The protein localises to the cytoplasm. The catalysed reaction is tRNA(Asx) + L-aspartate + ATP = L-aspartyl-tRNA(Asx) + AMP + diphosphate. Its function is as follows. Aspartyl-tRNA synthetase with relaxed tRNA specificity since it is able to aspartylate not only its cognate tRNA(Asp) but also tRNA(Asn). Reaction proceeds in two steps: L-aspartate is first activated by ATP to form Asp-AMP and then transferred to the acceptor end of tRNA(Asp/Asn). The chain is Aspartate--tRNA(Asp/Asn) ligase from Gluconobacter oxydans (strain 621H) (Gluconobacter suboxydans).